Here is a 311-residue protein sequence, read N- to C-terminus: MALPIIIDCDPGHDDAIALVLALASPELEVKAITSSAGNQTPDKTLRNVLRMLTLLKRPDIPVAGGAVKPLMRELIIADNVHGESGLDGPALPEPSFAPQSGTAVELMAKTLRESSQPVTIVSTGPQTNVALLLNSHPELHTKIARIVIMGGAMGLGNWTPAAEFNIYVDPEAAEIVFQSGIPVVMAGLDVTHKAQIHAADIERFRAIGNPISTIVAELLDFFMEYHKDEKWGFVGAPLHDPCTIAWLLKPEIFTTVERWVGVETQGKYTQGMTVVDYYFLTGNKPNATVMVDVDRQGFVDLLAERLKFYA.

Residue histidine 240 is part of the active site.

It belongs to the IUNH family. RihA subfamily.

Functionally, hydrolyzes cytidine or uridine to ribose and cytosine or uracil, respectively. The chain is Pyrimidine-specific ribonucleoside hydrolase RihA from Salmonella schwarzengrund (strain CVM19633).